The following is a 696-amino-acid chain: Elongation factor G (696 aa).

The region spanning 8 to 286 (EDVRNIGIAA…AVVAYLPAPT (279 aa)) is the tr-type G domain. GTP contacts are provided by residues 17 to 24 (AHIDAGKT), 81 to 85 (DTPGH), and 135 to 138 (NKMD).

It belongs to the TRAFAC class translation factor GTPase superfamily. Classic translation factor GTPase family. EF-G/EF-2 subfamily.

It is found in the cytoplasm. Its function is as follows. Catalyzes the GTP-dependent ribosomal translocation step during translation elongation. During this step, the ribosome changes from the pre-translocational (PRE) to the post-translocational (POST) state as the newly formed A-site-bound peptidyl-tRNA and P-site-bound deacylated tRNA move to the P and E sites, respectively. Catalyzes the coordinated movement of the two tRNA molecules, the mRNA and conformational changes in the ribosome. The polypeptide is Elongation factor G (Sulfurimonas denitrificans (strain ATCC 33889 / DSM 1251) (Thiomicrospira denitrificans (strain ATCC 33889 / DSM 1251))).